The primary structure comprises 75 residues: Small ribosomal subunit protein bS18 (75 aa).

Belongs to the bacterial ribosomal protein bS18 family. Part of the 30S ribosomal subunit. Forms a tight heterodimer with protein bS6.

In terms of biological role, binds as a heterodimer with protein bS6 to the central domain of the 16S rRNA, where it helps stabilize the platform of the 30S subunit. The chain is Small ribosomal subunit protein bS18 from Cellvibrio japonicus (strain Ueda107) (Pseudomonas fluorescens subsp. cellulosa).